Reading from the N-terminus, the 302-residue chain is Cuticle collagen dpy-13 (302 aa).

Triple-helical region regions lie at residues 106 to 135 (GPQG…PGKA), 154 to 210 (GPPG…EGLP), and 219 to 278 (GEPG…PGTP). Residues 108–284 (QGAPGAPGKP…PGTPGERGIC (177 aa)) are disordered. Positions 144-159 (TPPPCKPCPQGPPGAP) are enriched in pro residues. Positions 188–197 (PKGPNGAPGK) are enriched in low complexity. 2 stretches are compositionally biased toward pro residues: residues 247–257 (QPGPKGPPGPD) and 268–277 (QPGPVGPPGT).

Belongs to the cuticular collagen family. As to quaternary structure, collagen polypeptide chains are complexed within the cuticle by disulfide bonds and other types of covalent cross-links.

Nematode cuticles are composed largely of collagen-like proteins. The cuticle functions both as an exoskeleton and as a barrier to protect the worm from its environment. Mutations in dpy-13 affects the body shape. In Caenorhabditis elegans, this protein is Cuticle collagen dpy-13 (dpy-13).